The sequence spans 368 residues: Quinolinate synthase (368 aa).

Residues H46 and S63 each coordinate iminosuccinate. C110 is a [4Fe-4S] cluster binding site. Iminosuccinate is bound by residues 141–143 (YVN) and S162. Position 230 (C230) interacts with [4Fe-4S] cluster. Residues 256–258 (HPE) and T273 each bind iminosuccinate. [4Fe-4S] cluster is bound at residue C320.

Belongs to the quinolinate synthase family. Type 3 subfamily. [4Fe-4S] cluster serves as cofactor.

Its subcellular location is the cytoplasm. The catalysed reaction is iminosuccinate + dihydroxyacetone phosphate = quinolinate + phosphate + 2 H2O + H(+). Its pathway is cofactor biosynthesis; NAD(+) biosynthesis; quinolinate from iminoaspartate: step 1/1. Functionally, catalyzes the condensation of iminoaspartate with dihydroxyacetone phosphate to form quinolinate. This is Quinolinate synthase from Bacillus cereus (strain ATCC 14579 / DSM 31 / CCUG 7414 / JCM 2152 / NBRC 15305 / NCIMB 9373 / NCTC 2599 / NRRL B-3711).